The sequence spans 563 residues: Arylsulfatase K (563 aa).

An N-terminal signal peptide occupies residues 1–17 (MLLLLVSVIVALALVAP). Ca(2+) contacts are provided by D40 and C80. Catalysis depends on C80, which acts as the Nucleophile. At C80 the chain carries 3-oxoalanine (Cys). An N-linked (GlcNAc...) asparagine glycan is attached at N108. K128 provides a ligand contact to substrate. N191 is a glycosylation site (N-linked (GlcNAc...) asparagine). Substrate is bound at residue H249. Residue N260 is glycosylated (N-linked (GlcNAc...) asparagine). 2 residues coordinate Ca(2+): D311 and H312. N-linked (GlcNAc...) asparagine glycosylation is found at N373, N411, and N496.

It belongs to the sulfatase family. Ca(2+) serves as cofactor. Post-translationally, the conversion to 3-oxoalanine (also known as C-formylglycine, FGly), of a serine or cysteine residue in prokaryotes and of a cysteine residue in eukaryotes, is critical for catalytic activity. In terms of processing, the 75-kDa precursor undergoes proteolytic processing to yield a 23 kDa form. N-glycosylated with both high mannose and complex type sugars.

The protein localises to the secreted. It is found in the lysosome. The catalysed reaction is an aryl sulfate + H2O = a phenol + sulfate + H(+). The enzyme catalyses Hydrolysis of the 2-sulfate groups of the 2-O-sulfo-D-glucuronate residues of chondroitin sulfate, heparin and heparitin sulfate.. Catalyzes the hydrolysis of pseudosubstrates such as p-nitrocatechol sulfate and p-nitrophenyl sulfate. Catalyzes the hydrolysis of the 2-sulfate groups of the 2-O-sulfo-D-glucuronate residues of chondroitin sulfate, heparin and heparitin sulfate. Acts selectively on 2-sulfoglucuronate and lacks activity against 2-sulfoiduronate. The chain is Arylsulfatase K (Arsk) from Rattus norvegicus (Rat).